Reading from the N-terminus, the 374-residue chain is Patatin-2-Kuras 1 (374 aa).

The signal sequence occupies residues 1 to 11 (MILATTGSTCA). One can recognise a PNPLA domain in the interval 20-217 (LSIDGGGIKG…TVGDPALLSL (198 aa)). Residues 24 to 29 (GGGIKG) carry the GXGXXG motif. Residues 63–67 (GTSTG) carry the GXSXG motif. Serine 65 functions as the Nucleophile in the catalytic mechanism. A glycan (N-linked (GlcNAc...) asparagine) is linked at asparagine 103. The active-site Proton acceptor is aspartate 203. The DGA/G signature appears at 203-205 (DGA). Residues 309-372 (ENALTGTTTE…DRKKLRANKA (64 aa)) are a coiled coil.

It belongs to the patatin family. In terms of tissue distribution, tuber.

The protein resides in the vacuole. Its function is as follows. Probable lipolytic acyl hydrolase (LAH), an activity which is thought to be involved in the response of tubers to pathogens. The protein is Patatin-2-Kuras 1 (pat2-k1) of Solanum tuberosum (Potato).